A 310-amino-acid polypeptide reads, in one-letter code: Small ribosomal subunit protein uS2 (310 aa).

Over residues 249 to 272 (WERDLLEGEKAEKKDDAEAAEKPA) the composition is skewed to basic and acidic residues. Residues 249-310 (WERDLLEGEK…EAPAADAEQA (62 aa)) form a disordered region. The span at 273-310 (EAPAAEAPAAEAAEAPAAEAAPAEEPAAEAPAADAEQA) shows a compositional bias: low complexity.

This sequence belongs to the universal ribosomal protein uS2 family.

The chain is Small ribosomal subunit protein uS2 (rpsB) from Streptomyces coelicolor (strain ATCC BAA-471 / A3(2) / M145).